Reading from the N-terminus, the 133-residue chain is ATP synthase epsilon chain (133 aa).

This sequence belongs to the ATPase epsilon chain family. F-type ATPases have 2 components, CF(1) - the catalytic core - and CF(0) - the membrane proton channel. CF(1) has five subunits: alpha(3), beta(3), gamma(1), delta(1), epsilon(1). CF(0) has three main subunits: a, b and c.

It is found in the cell membrane. In terms of biological role, produces ATP from ADP in the presence of a proton gradient across the membrane. The chain is ATP synthase epsilon chain from Halalkalibacterium halodurans (strain ATCC BAA-125 / DSM 18197 / FERM 7344 / JCM 9153 / C-125) (Bacillus halodurans).